The sequence spans 692 residues: Elongation factor G (692 aa).

Positions 8-283 (NRIRNIGIAA…AVIDYLPAPT (276 aa)) constitute a tr-type G domain. GTP-binding positions include 17–24 (AHIDAGKT), 81–85 (DTPGH), and 135–138 (NKMD).

This sequence belongs to the TRAFAC class translation factor GTPase superfamily. Classic translation factor GTPase family. EF-G/EF-2 subfamily.

The protein localises to the cytoplasm. In terms of biological role, catalyzes the GTP-dependent ribosomal translocation step during translation elongation. During this step, the ribosome changes from the pre-translocational (PRE) to the post-translocational (POST) state as the newly formed A-site-bound peptidyl-tRNA and P-site-bound deacylated tRNA move to the P and E sites, respectively. Catalyzes the coordinated movement of the two tRNA molecules, the mRNA and conformational changes in the ribosome. This Helicobacter pylori (strain HPAG1) protein is Elongation factor G.